A 1164-amino-acid chain; its full sequence is Phospholipid-transporting ATPase IA (1164 aa).

At 1–75 (MPTMRRTVSE…PRFLYSQFRR (75 aa)) the chain is on the cytoplasmic side. Ser-25 carries the phosphoserine modification. Thr-28 is modified (phosphothreonine). Position 29 is a phosphoserine (Ser-29). Residues 76–96 (AANSFFLFIALLQQIPDVSPT) form a helical membrane-spanning segment. Residues 97–100 (GRYT) lie on the Exoplasmic loop side of the membrane. Residues 101-121 (TLVPLLFILAVAAIKEIIEDI) traverse the membrane as a helical segment. Over 122-297 (KRHKADNAVN…SNVERITNVQ (176 aa)) the chain is Cytoplasmic. Residues 298–318 (ILILFCILIAMSLVCSVGSAI) traverse the membrane as a helical segment. Topologically, residues 319 to 339 (WNRRHSGKDWYLHLHYGGASN) are exoplasmic loop. Residues 340–360 (FGLNFLTFIILFNNLIPISLL) traverse the membrane as a helical segment. The Cytoplasmic segment spans residues 361 to 866 (VTLEVVKFTQ…KCILYCFYKN (506 aa)). Residue Asp-409 is the 4-aspartylphosphate intermediate of the active site. Residues Asp-409, Lys-410, and Thr-411 each coordinate ATP. Asp-409 serves as a coordination point for Mg(2+). Residue Thr-411 participates in Mg(2+) binding. Ser-443 carries the phosphoserine modification. ATP contacts are provided by residues Glu-508, Phe-549, Lys-572, Arg-605, Thr-685, Gly-686, Asp-687, 741-748 (ALIIDGKT), Arg-775, and Lys-781. Mg(2+) is bound at residue Asp-801. Asn-804 and Asp-805 together coordinate ATP. Residue Asp-805 participates in Mg(2+) binding. The helical transmembrane segment at 867-887 (IVLYIIEIWFAFVNGFSGQIL) threads the bilayer. Over 888-890 (FER) the chain is Exoplasmic loop. The chain crosses the membrane as a helical span at residues 891-911 (WCIGLYNVMFTAMPPLTLGIF). The Cytoplasmic segment spans residues 912-939 (ERSCRKENMLKYPELYKTSQNALDFNTK). The helical transmembrane segment at 940-960 (VFWVHCLNGLFHSVILFWFPL) threads the bilayer. Residues 961 to 977 (KALQYGTVFGNGKTSDY) are Exoplasmic loop-facing. A helical transmembrane segment spans residues 978–998 (LLLGNFVYTFVVITVCLKAGL). Over 999 to 1008 (ETSYWTWFSH) the chain is Cytoplasmic. Residues 1009-1029 (IAIWGSIALWVVFFGIYSSLW) traverse the membrane as a helical segment. Residues 1030-1044 (PAVPMAPDMSGEAAM) lie on the Exoplasmic loop side of the membrane. A helical membrane pass occupies residues 1045–1065 (LFSSGVFWVGLLSIPVASLLL). At 1066–1164 (DVLYKVIKRT…DTTKQRPDEW (99 aa)) the chain is on the cytoplasmic side. 1095–1102 (GAVVLGKS) lines the ATP pocket. Phosphoserine is present on Ser-1126.

Belongs to the cation transport ATPase (P-type) (TC 3.A.3) family. Type IV subfamily. As to quaternary structure, component of a P4-ATPase flippase complex which consists of a catalytic alpha subunit and an accessory beta subunit. Interacts with TMEM30A to form a flippase complex; this complex forms an intermediate phosphoenzyme. Interacts with TMEM30B; this interaction is reported conflictingly. Mg(2+) serves as cofactor. Cleaved by calpain in a caspase- and calcium influx-dependent manner only during platelet apoptosis and may lead to inactivation. Found in most tissues except liver and testis. Most abundant in brain and lung. Also detected in fetal tissues. Isoform 1 is expressed in brain. Isoform 2 and isoform 3 are expressed in reticulocytes. Expressed in mouse hippocampus in both dentate gyrus (DG) and the CA3 regions. Expressed in both neuronal as well as non-neuronal cells within the DG. Highly expressed in platelets.

It localises to the cytoplasmic vesicle. The protein localises to the secretory vesicle. The protein resides in the chromaffin granule membrane. Its subcellular location is the cytoplasmic granule. It is found in the cell membrane. It localises to the endoplasmic reticulum. The protein localises to the golgi apparatus. The protein resides in the endomembrane system. It carries out the reaction ATP + H2O + phospholipidSide 1 = ADP + phosphate + phospholipidSide 2.. The catalysed reaction is a 1,2-diacyl-sn-glycero-3-phospho-L-serine(out) + ATP + H2O = a 1,2-diacyl-sn-glycero-3-phospho-L-serine(in) + ADP + phosphate + H(+). With respect to regulation, ATPase activity is stimulated by phosphatidylserine (PS) and minimally by phosphatidylethanolamine (PE). ATPase activity is inhibited by the vanadate and by the presence of calcium. Catalytic component of a P4-ATPase flippase complex which catalyzes the hydrolysis of ATP coupled to the transport of aminophospholipids from the outer to the inner leaflet of various membranes and ensures the maintenance of asymmetric distribution of phospholipids. Phospholipid translocation also seems to be implicated in vesicle formation and in uptake of lipid signaling molecules. In vitro, its ATPase activity is selectively and stereospecifically stimulated by phosphatidylserine (PS). The flippase complex ATP8A1:TMEM30A seems to play a role in regulation of cell migration probably involving flippase-mediated translocation of phosphatidylethanolamine (PE) at the cell membrane. Acts as aminophospholipid translocase at the cell membrane in neuronal cells; the activity is associated with hippocampus-dependent learning. May play a role in brain connectivity. The polypeptide is Phospholipid-transporting ATPase IA (Mus musculus (Mouse)).